The sequence spans 526 residues: Biotin carboxylase 2, chloroplastic (526 aa).

A chloroplast-targeting transit peptide spans 1-71; sequence MEATLPVCKS…GVTCRAEKIL (71 aa). Residues Lys181, 213–274, Lys223, 229–230, 265–268, and His273 contribute to the ATP site; these read ASEI…PRHI, GG, and EKYV. The ATP-grasp domain maps to 185–382; sequence RETMKKANVP…LIEEQIRVAM (198 aa). Position 302 (Lys302) interacts with hydrogencarbonate. ATP contacts are provided by Glu340 and Glu353. The Mg(2+) site is built by Glu340, Glu353, and Asn355. Glu340, Glu353, and Asn355 together coordinate Mn(2+). The hydrogencarbonate site is built by Arg357, Val360, and Arg403. Arg357 is a catalytic residue. Arg403 is a biotin binding site.

As to quaternary structure, acetyl-CoA carboxylase is a heterohexamer composed of biotin carboxyl carrier protein, biotin carboxylase and two subunits each of ACCase subunit alpha and ACCase plastid-coded subunit beta (accD). Requires Mg(2+) as cofactor. The cofactor is Mn(2+).

The protein resides in the plastid. The protein localises to the chloroplast. It carries out the reaction N(6)-biotinyl-L-lysyl-[protein] + hydrogencarbonate + ATP = N(6)-carboxybiotinyl-L-lysyl-[protein] + ADP + phosphate + H(+). It functions in the pathway lipid metabolism; malonyl-CoA biosynthesis; malonyl-CoA from acetyl-CoA: step 1/1. Functionally, this protein is a component of the acetyl coenzyme A carboxylase complex; first, biotin carboxylase catalyzes the carboxylation of the carrier protein and then the transcarboxylase transfers the carboxyl group to form malonyl-CoA. The chain is Biotin carboxylase 2, chloroplastic from Populus trichocarpa (Western balsam poplar).